The following is a 238-amino-acid chain: Neuromodulin (238 aa).

Positions 1-238 (MLCCMRRTKQ…EEPEADQEHA (238 aa)) are disordered. 2 S-palmitoyl cysteine lipidation sites follow: cysteine 3 and cysteine 4. The span at 9–32 (KQVEKNDDDQKIEQDGIKPEDKAH) shows a compositional bias: basic and acidic residues. Positions 31-60 (AHKAATKIQASFRGHITRKKLKGEKKDDVQ) constitute an IQ domain. The residue at position 41 (serine 41) is a Phosphoserine; by PHK and PKC. Residues 54-83 (EKKDDVQAAEAEANKKDEAPVADGVEKKGE) show a composition bias toward basic and acidic residues. Over residues 84–95 (GTTTAEAAPATG) the composition is skewed to low complexity. The segment covering 97 to 116 (KPDEPGKAGETPSEEKKGEG) has biased composition (basic and acidic residues). Residues 119–130 (ATEQAAPQAPAS) are compositionally biased toward low complexity. Residues 139 to 154 (ETESATKASTDNSPSS) show a composition bias toward polar residues. A phosphoserine mark is found at serine 151, serine 153, and serine 154. Residues 155–167 (KAEDAPAKEEPKQ) show a composition bias toward basic and acidic residues. Low complexity predominate over residues 168-199 (ADVPAAVTAAAATTPAAEDAAAKATAQPPTET). Phosphothreonine is present on threonine 181. Phosphoserine; by CK2 is present on residues serine 202 and serine 203. Over residues 213-225 (DETKPKESARQDE) the composition is skewed to basic and acidic residues. Over residues 226–238 (GKEEEPEADQEHA) the composition is skewed to acidic residues.

It belongs to the neuromodulin family. Identified in a complex containing FGFR4, NCAM1, CDH2, PLCG1, FRS2, SRC, SHC1, GAP43 and CTTN. Interacts (via IQ domain) with calmodulin. Binds calmodulin with a greater affinity in the absence of Ca(2+) than in its presence. Phosphorylated. Phosphorylation of this protein by a protein kinase C is specifically correlated with certain forms of synaptic plasticity. Post-translationally, palmitoylated by ZDHHC3. Palmitoylation is regulated by ARF6 and is essential for plasma membrane association and axonal and dendritic filopodia induction. Deacylated by LYPLA2.

It localises to the cell membrane. Its subcellular location is the cell projection. The protein resides in the growth cone membrane. The protein localises to the synapse. It is found in the filopodium membrane. It localises to the perikaryon. Its subcellular location is the dendrite. The protein resides in the axon. The protein localises to the cytoplasm. In terms of biological role, this protein is associated with nerve growth. It is a major component of the motile 'growth cones' that form the tips of elongating axons. Plays a role in axonal and dendritic filopodia induction. This is Neuromodulin (GAP43) from Homo sapiens (Human).